A 390-amino-acid chain; its full sequence is Malonyl-CoA-acyl carrier protein transacylase, mitochondrial (390 aa).

Residues 1 to 21 constitute a mitochondrion transit peptide; it reads MSVRVARVAWVRGLGASYRRG. Catalysis depends on residues Ser-153 and His-270. Residue Lys-314 is modified to N6-succinyllysine.

It belongs to the type II malonyltransferase family.

Its subcellular location is the mitochondrion. It carries out the reaction holo-[ACP] + malonyl-CoA = malonyl-[ACP] + CoA. Its pathway is lipid metabolism; fatty acid biosynthesis. In terms of biological role, catalyzes the transfer of a malonyl moiety from malonyl-CoA to the free thiol group of the phosphopantetheine arm of the mitochondrial ACP protein (NDUFAB1). This suggests the existence of the biosynthesis of fatty acids in mitochondria. Also acts as a mitochondrial small ribosomal subunit (mt-SSU) assembly factor. The protein is Malonyl-CoA-acyl carrier protein transacylase, mitochondrial of Homo sapiens (Human).